The chain runs to 665 residues: Secreted LysM effector Lys3 (665 aa).

Residues 1–19 (MLWLTVSLTGFALLGVVAA) form the signal peptide. N-linked (GlcNAc...) asparagine glycosylation is found at N43 and N153. LysM domains follow at residues 166 to 211 (RTYT…TLCL), 216 to 264 (TLRK…YICI), and 303 to 349 (KWYV…AYCV). An N-linked (GlcNAc...) asparagine glycan is attached at N234. N-linked (GlcNAc...) asparagine glycosylation occurs at N398. The 46-residue stretch at 409–454 (SWSDAAKLNSCSFIAHINGVTVSQLLQWNPSLSKDSCSLSRELYYC) folds into the LysM 4 domain. N531 carries an N-linked (GlcNAc...) asparagine glycan. The interval 585–610 (SSVSMTNSAPATATSTGGPPAPTQDG) is disordered. A compositionally biased stretch (low complexity) spans 592–602 (SAPATATSTGG). The N-linked (GlcNAc...) asparagine glycan is linked to N614. Residues 617-663 (KWHVVESGDGCWAIYTKYGITSDQLFEWNTKISKDCSNIWLGYAVCV) form the LysM 5 domain.

The protein belongs to the secreted LysM effector family.

Functionally, might have a role in sequestration of chitin oligosaccharides (breakdown products of fungal cell walls that are released during invasion and act as triggers of host immunity) to dampen host defense. The sequence is that of Secreted LysM effector Lys3 from Pochonia chlamydosporia (strain 123) (Metacordyceps chlamydosporia).